A 244-amino-acid polypeptide reads, in one-letter code: Heat shock transcription factor (244 aa).

The DNA-binding element occupies 13–108 (IPKFIMKLYK…LLGFDDSLRM (96 aa)). The interval 123–168 (DGSLKEIVEYLYVQNQELYTELSVCKERIERQERALNGLIEILSRV) is involved in trimerization. The tract at residues 204–244 (EGCEPASPPLQDKGIPELSFKPGGIPHADSDTKDDNYDPFF) is disordered. Positions 231-244 (ADSDTKDDNYDPFF) are enriched in basic and acidic residues.

Belongs to the HSF family. Homotrimer. Homotrimerization increases the affinity of HSF1 to DNA.

The protein localises to the nucleus. DNA-binding transcription factor that specifically binds heat shock promoter elements (HSE) and activates transcription. In Encephalitozoon cuniculi (strain GB-M1) (Microsporidian parasite), this protein is Heat shock transcription factor.